We begin with the raw amino-acid sequence, 558 residues long: Glutamine--tRNA ligase (558 aa).

Residues 34-44 (PEPNGYLHIGH) carry the 'HIGH' region motif. ATP contacts are provided by residues 35-37 (EPN) and 41-47 (HIGHAKS). Residues Asp67 and Tyr212 each coordinate L-glutamine. ATP contacts are provided by residues Thr231, 261–262 (RL), and 269–271 (LSK). A 'KMSKS' region motif is present at residues 268–272 (VLSKR).

It belongs to the class-I aminoacyl-tRNA synthetase family. As to quaternary structure, monomer.

Its subcellular location is the cytoplasm. The enzyme catalyses tRNA(Gln) + L-glutamine + ATP = L-glutaminyl-tRNA(Gln) + AMP + diphosphate. The chain is Glutamine--tRNA ligase from Pseudoalteromonas atlantica (strain T6c / ATCC BAA-1087).